Reading from the N-terminus, the 215-residue chain is Outer membrane protein assembly factor BamC homolog (215 aa).

A signal peptide spans 1-16; the sequence is MKKIILNLVTAIILAG. The N-palmitoyl cysteine moiety is linked to residue Cys-17. Cys-17 carries the S-diacylglycerol cysteine lipid modification.

Belongs to the BamC family.

The protein localises to the cell outer membrane. The protein is Outer membrane protein assembly factor BamC homolog of Haemophilus influenzae (strain ATCC 51907 / DSM 11121 / KW20 / Rd).